An 822-amino-acid polypeptide reads, in one-letter code: Putative ESX-1 scaffolding and assembly protein SaeB (822 aa).

Functionally, may be involved in assembly of the ESX-1 / type VII specialized secretion system (T7SS), which exports several proteins including EsxA and EsxB. Involved in DNA conjugation in recipient (MKD8) but not donor (mc(2)155) strain. The chain is Putative ESX-1 scaffolding and assembly protein SaeB (saeB) from Mycolicibacterium smegmatis (strain MKD8) (Mycobacterium smegmatis).